Here is a 258-residue protein sequence, read N- to C-terminus: Global transcriptional regulator CodY (258 aa).

Positions 1-156 (MSSLLDKTRM…SATIIGLEIL (156 aa)) are GAF domain. The H-T-H motif DNA-binding region spans 204–223 (ASKIADKVGITRSVIVNALR).

The protein belongs to the CodY family.

It localises to the cytoplasm. In terms of biological role, DNA-binding global transcriptional regulator which is involved in the adaptive response to starvation and acts by directly or indirectly controlling the expression of numerous genes in response to nutrient availability. During rapid exponential growth, CodY is highly active and represses genes whose products allow adaptation to nutrient depletion. The protein is Global transcriptional regulator CodY of Clostridium botulinum (strain Okra / Type B1).